A 97-amino-acid chain; its full sequence is Large ribosomal subunit protein uL23 (97 aa).

The protein belongs to the universal ribosomal protein uL23 family. As to quaternary structure, part of the 50S ribosomal subunit. Contacts protein L29, and trigger factor when it is bound to the ribosome.

One of the early assembly proteins it binds 23S rRNA. One of the proteins that surrounds the polypeptide exit tunnel on the outside of the ribosome. Forms the main docking site for trigger factor binding to the ribosome. The protein is Large ribosomal subunit protein uL23 of Pelagibacter ubique (strain HTCC1062).